The chain runs to 212 residues: Orotate phosphoribosyltransferase (212 aa).

Residues R95, K99, H101, and 121–129 (DDLITTGGS) contribute to the 5-phospho-alpha-D-ribose 1-diphosphate site. T125 serves as a coordination point for orotate.

Belongs to the purine/pyrimidine phosphoribosyltransferase family. PyrE subfamily. Homodimer. Mg(2+) is required as a cofactor.

The enzyme catalyses orotidine 5'-phosphate + diphosphate = orotate + 5-phospho-alpha-D-ribose 1-diphosphate. It functions in the pathway pyrimidine metabolism; UMP biosynthesis via de novo pathway; UMP from orotate: step 1/2. In terms of biological role, catalyzes the transfer of a ribosyl phosphate group from 5-phosphoribose 1-diphosphate to orotate, leading to the formation of orotidine monophosphate (OMP). In Lactobacillus johnsonii (strain CNCM I-12250 / La1 / NCC 533), this protein is Orotate phosphoribosyltransferase.